The following is a 127-amino-acid chain: Fluoride-specific ion channel FluC (127 aa).

Helical transmembrane passes span 4–24 (LLCAVFIGGGTGSVLRWWLGM), 35–55 (IGTLTANLVGAFVIGAGLAWF), 71–91 (TGFCGGLTTFSTFSAEVVFLL), and 101–121 (LNVMVNLLGSFAMTAVAFWLF). Residues Gly-75 and Thr-78 each coordinate Na(+).

It belongs to the fluoride channel Fluc/FEX (TC 1.A.43) family.

It is found in the cell inner membrane. The enzyme catalyses fluoride(in) = fluoride(out). Its activity is regulated as follows. Na(+) is not transported, but it plays an essential structural role and its presence is essential for fluoride channel function. Its function is as follows. Fluoride-specific ion channel. Important for reducing fluoride concentration in the cell, thus reducing its toxicity. The protein is Fluoride-specific ion channel FluC of Klebsiella pneumoniae (strain 342).